The sequence spans 375 residues: tRNA-specific 2-thiouridylase MnmA (375 aa).

ATP is bound by residues 12-19 and M38; that span reads GMSGGVDS. The interval 98-100 is interaction with target base in tRNA; the sequence is NPD. C103 (nucleophile) is an active-site residue. Residues C103 and C200 are joined by a disulfide bond. An ATP-binding site is contributed by G127. An interaction with tRNA region spans residues 150 to 152; the sequence is KDQ. The Cysteine persulfide intermediate role is filled by C200. Residues 312–313 are interaction with tRNA; it reads RY.

Belongs to the MnmA/TRMU family.

The protein localises to the cytoplasm. The enzyme catalyses S-sulfanyl-L-cysteinyl-[protein] + uridine(34) in tRNA + AH2 + ATP = 2-thiouridine(34) in tRNA + L-cysteinyl-[protein] + A + AMP + diphosphate + H(+). In terms of biological role, catalyzes the 2-thiolation of uridine at the wobble position (U34) of tRNA, leading to the formation of s(2)U34. The chain is tRNA-specific 2-thiouridylase MnmA from Lactobacillus delbrueckii subsp. bulgaricus (strain ATCC BAA-365 / Lb-18).